Here is a 387-residue protein sequence, read N- to C-terminus: Cyclin-B1-4 (387 aa).

The tract at residues 1–29 is disordered; that stretch reads MASSRVSDLPHQRGIAGEIKPKNVAGHGR.

This sequence belongs to the cyclin family. Cyclin AB subfamily.

This chain is Cyclin-B1-4 (CYCB1-4), found in Arabidopsis thaliana (Mouse-ear cress).